The sequence spans 493 residues: Cytoplasmic tRNA 2-thiolation protein 2 (493 aa).

Position 489 is a phosphoserine (Ser489).

The protein belongs to the CTU2/NCS2 family. In terms of assembly, interacts with NCS6 and URM1. May act by forming a heterodimer with NCS6.

The protein localises to the cytoplasm. It functions in the pathway tRNA modification; 5-methoxycarbonylmethyl-2-thiouridine-tRNA biosynthesis. In terms of biological role, plays a central role in 2-thiolation of mcm(5)S(2)U at tRNA wobble positions of tRNA(Lys), tRNA(Glu) and tRNA(Gln). May act by forming a heterodimer with NCS6 that ligates sulfur from thiocarboxylated URM1 onto the uridine of tRNAs at wobble position. Prior mcm(5) tRNA modification by the elongator complex is required for 2-thiolation. May also be involved in protein urmylation. The chain is Cytoplasmic tRNA 2-thiolation protein 2 from Saccharomyces cerevisiae (strain AWRI1631) (Baker's yeast).